Reading from the N-terminus, the 76-residue chain is MSSDGSAGKAVVEAKGLNPGLIVLLVIGGLLVTFLIANYVMYMYAQKNLPPRKKKPLSKKKLKREKLKQGVPVPGE.

A Nuclear localization signal motif is present at residues P50–K55. Positions P51–K66 are enriched in basic residues. The disordered stretch occupies residues P51–E76.

The protein belongs to the S1FA transcription factor family.

Its subcellular location is the nucleus. Functionally, DNA-binding protein that specifically recognizes a negative element (S1F) within the RPS1 promoter. The protein is DNA-binding protein S1FA2 (S1FA2) of Arabidopsis thaliana (Mouse-ear cress).